Reading from the N-terminus, the 207-residue chain is Holliday junction branch migration complex subunit RuvA (207 aa).

Residues 1–64 form a domain I region; that stretch reads MIGRLTGILA…ETSQQLFGFS (64 aa). The interval 65–142 is domain II; that stretch reads SQQDRELFRM…ALDTTPSEHS (78 aa). The interval 143-157 is flexible linker; it reads PTGEGAGIVRVDPVI. Residues 158–207 are domain III; that stretch reads NTNVIIADAESALIGLGYKPTEAAKAVSAAYNDTITTSEDLIRAALKGMI.

The protein belongs to the RuvA family. Homotetramer. Forms an RuvA(8)-RuvB(12)-Holliday junction (HJ) complex. HJ DNA is sandwiched between 2 RuvA tetramers; dsDNA enters through RuvA and exits via RuvB. An RuvB hexamer assembles on each DNA strand where it exits the tetramer. Each RuvB hexamer is contacted by two RuvA subunits (via domain III) on 2 adjacent RuvB subunits; this complex drives branch migration. In the full resolvosome a probable DNA-RuvA(4)-RuvB(12)-RuvC(2) complex forms which resolves the HJ.

It is found in the cytoplasm. Functionally, the RuvA-RuvB-RuvC complex processes Holliday junction (HJ) DNA during genetic recombination and DNA repair, while the RuvA-RuvB complex plays an important role in the rescue of blocked DNA replication forks via replication fork reversal (RFR). RuvA specifically binds to HJ cruciform DNA, conferring on it an open structure. The RuvB hexamer acts as an ATP-dependent pump, pulling dsDNA into and through the RuvAB complex. HJ branch migration allows RuvC to scan DNA until it finds its consensus sequence, where it cleaves and resolves the cruciform DNA. The sequence is that of Holliday junction branch migration complex subunit RuvA from Saccharophagus degradans (strain 2-40 / ATCC 43961 / DSM 17024).